The chain runs to 397 residues: Phosphoglycerate kinase (397 aa).

Substrate-binding positions include 25–27 (DLN), Arg41, 64–67 (HLGR), Arg118, and Arg151. Residues Lys202, Glu324, and 350–353 (GGDT) each bind ATP.

The protein belongs to the phosphoglycerate kinase family. Monomer.

Its subcellular location is the cytoplasm. It catalyses the reaction (2R)-3-phosphoglycerate + ATP = (2R)-3-phospho-glyceroyl phosphate + ADP. It functions in the pathway carbohydrate degradation; glycolysis; pyruvate from D-glyceraldehyde 3-phosphate: step 2/5. This chain is Phosphoglycerate kinase, found in Janthinobacterium sp. (strain Marseille) (Minibacterium massiliensis).